The primary structure comprises 198 residues: Recombination protein RecR (198 aa).

The segment at 57–72 (CQRCNTFSEAELCAIC) adopts a C4-type zinc-finger fold. The Toprim domain occupies 80 to 175 (DQLCIVEMPA…TVTRIARGMP (96 aa)).

The protein belongs to the RecR family.

Functionally, may play a role in DNA repair. It seems to be involved in an RecBC-independent recombinational process of DNA repair. It may act with RecF and RecO. The chain is Recombination protein RecR from Chromobacterium violaceum (strain ATCC 12472 / DSM 30191 / JCM 1249 / CCUG 213 / NBRC 12614 / NCIMB 9131 / NCTC 9757 / MK).